Here is a 244-residue protein sequence, read N- to C-terminus: ATP synthase subunit a, chloroplastic (244 aa).

Transmembrane regions (helical) follow at residues 35–55 (QVLITSWVVIAILLGSAVIAV), 92–112 (VPFIGTMFLFIFVSNWSGALL), 131–151 (INTTVALALLTSVAYFYAGLS), 196–216 (LVVVVLVSLVPSVVPIPVMFL), and 217–237 (GLFTSGIQALIFATLAAAYIG).

It belongs to the ATPase A chain family. In terms of assembly, F-type ATPases have 2 components, CF(1) - the catalytic core - and CF(0) - the membrane proton channel. CF(1) has five subunits: alpha(3), beta(3), gamma(1), delta(1), epsilon(1). CF(0) has four main subunits: a, b, b' and c.

The protein resides in the plastid. It localises to the chloroplast thylakoid membrane. In terms of biological role, key component of the proton channel; it plays a direct role in the translocation of protons across the membrane. The polypeptide is ATP synthase subunit a, chloroplastic (Gossypium hirsutum (Upland cotton)).